Consider the following 373-residue polypeptide: Histidinol-phosphate aminotransferase (373 aa).

N6-(pyridoxal phosphate)lysine is present on Lys229.

It belongs to the class-II pyridoxal-phosphate-dependent aminotransferase family. Histidinol-phosphate aminotransferase subfamily. The cofactor is pyridoxal 5'-phosphate.

It catalyses the reaction L-histidinol phosphate + 2-oxoglutarate = 3-(imidazol-4-yl)-2-oxopropyl phosphate + L-glutamate. It functions in the pathway amino-acid biosynthesis; L-histidine biosynthesis; L-histidine from 5-phospho-alpha-D-ribose 1-diphosphate: step 7/9. This is Histidinol-phosphate aminotransferase (hisC) from Methanothermobacter thermautotrophicus (strain ATCC 29096 / DSM 1053 / JCM 10044 / NBRC 100330 / Delta H) (Methanobacterium thermoautotrophicum).